Here is a 98-residue protein sequence, read N- to C-terminus: Putative pterin-4-alpha-carbinolamine dehydratase (98 aa).

It belongs to the pterin-4-alpha-carbinolamine dehydratase family.

The catalysed reaction is (4aS,6R)-4a-hydroxy-L-erythro-5,6,7,8-tetrahydrobiopterin = (6R)-L-erythro-6,7-dihydrobiopterin + H2O. The chain is Putative pterin-4-alpha-carbinolamine dehydratase from Mesorhizobium japonicum (strain LMG 29417 / CECT 9101 / MAFF 303099) (Mesorhizobium loti (strain MAFF 303099)).